The sequence spans 41 residues: Large ribosomal subunit protein bL36 (41 aa).

It belongs to the bacterial ribosomal protein bL36 family.

The chain is Large ribosomal subunit protein bL36 from Ruegeria sp. (strain TM1040) (Silicibacter sp.).